The primary structure comprises 263 residues: Triosephosphate isomerase (263 aa).

10 to 12 contributes to the substrate binding site; the sequence is NWK. His-104 serves as the catalytic Electrophile. The active-site Proton acceptor is Glu-176. Residues Gly-182, Ser-221, and 242 to 243 contribute to the substrate site; that span reads GG.

The protein belongs to the triosephosphate isomerase family. Homodimer.

The protein localises to the cytoplasm. It catalyses the reaction D-glyceraldehyde 3-phosphate = dihydroxyacetone phosphate. It participates in carbohydrate biosynthesis; gluconeogenesis. Its pathway is carbohydrate degradation; glycolysis; D-glyceraldehyde 3-phosphate from glycerone phosphate: step 1/1. Its function is as follows. Involved in the gluconeogenesis. Catalyzes stereospecifically the conversion of dihydroxyacetone phosphate (DHAP) to D-glyceraldehyde-3-phosphate (G3P). This chain is Triosephosphate isomerase, found in Haemophilus influenzae (strain PittEE).